The primary structure comprises 880 residues: Dynamin-like protein A (880 aa).

Positions 1-124 (MSVFKKKDKS…QVELERKRRD (124 aa)) are disordered. The span at 8–20 (DKSDDKKKKHDEE) shows a compositional bias: basic and acidic residues. A compositionally biased stretch (polar residues) spans 22–31 (PQGTFQPASQ). Low complexity predominate over residues 32 to 68 (STSNTNLNSLASSVNNGASVGSTNGSTPNNSNGSTPT). The stretch at 69–152 (YNHNNSAEEL…NEQVEISSLE (84 aa)) forms a coiled coil. Basic and acidic residues-rich tracts occupy residues 77–94 (ELEK…KSEL) and 103–124 (KKKE…KRRD). In terms of domain architecture, Dynamin-type G spans 191–478 (AVSHPEIVFV…VWKSYQDTIP (288 aa)). Residues 201–208 (GPRSSGKS) are G1 motif. 201 to 208 (GPRSSGKS) serves as a coordination point for GTP. The segment at 227-240 (IVGVGGSNANGCSK) is G2 motif. Residues 315-318 (DSPG) form a G3 motif region. Residues 315–319 (DSPGL) and 380–383 (TKFH) contribute to the GTP site. The G4 motif stretch occupies residues 380 to 383 (TKFH). The segment at 413–416 (LPNH) is G5 motif. A coiled-coil region spans residues 479 to 509 (RILKHLRSKRQTAEATLNELQKQSSSLDSTK). A compositionally biased stretch (polar residues) spans 532-543 (TSEGNPSANGQT). Residues 532–551 (TSEGNPSANGQTLDEEKSQQ) are disordered. Residues 824–861 (SNEQLEQLFEVQATREQLKQEEKKQQQILEKYSQIDEQ) adopt a coiled-coil conformation.

Belongs to the TRAFAC class dynamin-like GTPase superfamily. Dynamin/Fzo/YdjA family.

It is found in the cytoplasm. Its subcellular location is the cleavage furrow. The catalysed reaction is GTP + H2O = GDP + phosphate + H(+). In terms of biological role, involved in cytokinesis. May hydrolyze GTP. The sequence is that of Dynamin-like protein A (dlpA) from Dictyostelium discoideum (Social amoeba).